Here is a 213-residue protein sequence, read N- to C-terminus: dITP/XTP pyrophosphatase (213 aa).

Substrate is bound at residue 17-22; sequence SNNAGK. Asp78 functions as the Proton acceptor in the catalytic mechanism. Asp78 is a Mg(2+) binding site. Residues Ser79, 164–167, Lys187, and 192–193 each bind substrate; these read FGYD and HR.

The protein belongs to the HAM1 NTPase family. Homodimer. Requires Mg(2+) as cofactor.

The catalysed reaction is XTP + H2O = XMP + diphosphate + H(+). The enzyme catalyses dITP + H2O = dIMP + diphosphate + H(+). It carries out the reaction ITP + H2O = IMP + diphosphate + H(+). Pyrophosphatase that catalyzes the hydrolysis of nucleoside triphosphates to their monophosphate derivatives, with a high preference for the non-canonical purine nucleotides XTP (xanthosine triphosphate), dITP (deoxyinosine triphosphate) and ITP. Seems to function as a house-cleaning enzyme that removes non-canonical purine nucleotides from the nucleotide pool, thus preventing their incorporation into DNA/RNA and avoiding chromosomal lesions. This chain is dITP/XTP pyrophosphatase, found in Bordetella parapertussis (strain 12822 / ATCC BAA-587 / NCTC 13253).